A 263-amino-acid polypeptide reads, in one-letter code: Thiazole synthase (263 aa).

The active-site Schiff-base intermediate with DXP is Lys100. Residues Gly161, 188–189, and 210–211 contribute to the 1-deoxy-D-xylulose 5-phosphate site; these read AG and NS.

This sequence belongs to the ThiG family. In terms of assembly, homotetramer. Forms heterodimers with either ThiH or ThiS.

It localises to the cytoplasm. The catalysed reaction is [ThiS sulfur-carrier protein]-C-terminal-Gly-aminoethanethioate + 2-iminoacetate + 1-deoxy-D-xylulose 5-phosphate = [ThiS sulfur-carrier protein]-C-terminal Gly-Gly + 2-[(2R,5Z)-2-carboxy-4-methylthiazol-5(2H)-ylidene]ethyl phosphate + 2 H2O + H(+). Its pathway is cofactor biosynthesis; thiamine diphosphate biosynthesis. Its function is as follows. Catalyzes the rearrangement of 1-deoxy-D-xylulose 5-phosphate (DXP) to produce the thiazole phosphate moiety of thiamine. Sulfur is provided by the thiocarboxylate moiety of the carrier protein ThiS. In vitro, sulfur can be provided by H(2)S. This Pseudoalteromonas translucida (strain TAC 125) protein is Thiazole synthase.